Here is a 119-residue protein sequence, read N- to C-terminus: Protein phosphatase EYA3 (119 aa).

This sequence belongs to the HAD-like hydrolase superfamily. EYA family. Mg(2+) is required as a cofactor.

The protein localises to the cytoplasm. It localises to the nucleus. It carries out the reaction O-phospho-L-tyrosyl-[protein] + H2O = L-tyrosyl-[protein] + phosphate. Its function is as follows. Tyrosine phosphatase that specifically dephosphorylates 'Tyr-142' of histone H2AX (H2AXY142ph). 'Tyr-142' phosphorylation of histone H2AX plays a central role in DNA repair and acts as a mark that distinguishes between apoptotic and repair responses to genotoxic stress. Promotes efficient DNA repair by dephosphorylating H2AX, promoting the recruitment of DNA repair complexes containing MDC1. Its function as histone phosphatase probably explains its role in transcription regulation during organogenesis. May be involved in development of the eye. This Gallus gallus (Chicken) protein is Protein phosphatase EYA3 (EYA3).